A 515-amino-acid chain; its full sequence is Maturase K (515 aa).

Belongs to the intron maturase 2 family. MatK subfamily.

It is found in the plastid. The protein resides in the chloroplast. In terms of biological role, usually encoded in the trnK tRNA gene intron. Probably assists in splicing its own and other chloroplast group II introns. The sequence is that of Maturase K from Cedrus atlantica (Atlas cedar).